The chain runs to 658 residues: Integrator complex subunit 9 (658 aa).

The segment at 547-586 is disordered; sequence KDNKHVLQPPPKPVAPPGSKKRKRPAEESPETPPFKPLLS. Residues 566-570 carry the Nuclear localization signal motif; the sequence is KKRKR.

It belongs to the metallo-beta-lactamase superfamily. RNA-metabolizing metallo-beta-lactamase-like family. INTS9 subfamily. In terms of assembly, component of the Integrator complex, composed of core subunits INTS1, INTS2, INTS3, INTS4, INTS5, INTS6, INTS7, INTS8, INTS9/RC74, INTS10, INTS11/CPSF3L, INTS12, INTS13, INTS14 and INTS15. The core complex associates with protein phosphatase 2A subunits PPP2CA and PPP2R1A, to form the Integrator-PP2A (INTAC) complex. INTS9 is part of the RNA endonuclease subcomplex, composed of INTS4, INTS9, INTS11 and inositol hexakisphosphate (InsP6).

The protein resides in the nucleus. It is found in the cytoplasm. Component of the integrator complex, a multiprotein complex that terminates RNA polymerase II (Pol II) transcription in the promoter-proximal region of genes. The integrator complex provides a quality checkpoint during transcription elongation by driving premature transcription termination of transcripts that are unfavorably configured for transcriptional elongation: the complex terminates transcription by (1) catalyzing dephosphorylation of the C-terminal domain (CTD) of Pol II subunit POLR2A/RPB1 and SUPT5H/SPT5, (2) degrading the exiting nascent RNA transcript via endonuclease activity and (3) promoting the release of Pol II from bound DNA. The integrator complex is also involved in terminating the synthesis of non-coding Pol II transcripts, such as enhancer RNAs (eRNAs), small nuclear RNAs (snRNAs), telomerase RNAs and long non-coding RNAs (lncRNAs). This is Integrator complex subunit 9 (ints9) from Xenopus laevis (African clawed frog).